A 439-amino-acid polypeptide reads, in one-letter code: Protein dumpy-20 (439 aa).

The tract at residues 93 to 116 is disordered; sequence GTLSDPSLHGSNSSSSTSDVGSSV. The span at 96-116 shows a compositional bias: low complexity; it reads SDPSLHGSNSSSSTSDVGSSV. 2 consecutive BED-type zinc fingers follow at residues 135–184 and 349–398; these read PTEN…YQKV and KTEH…YNDV. Zn(2+) contacts are provided by C154, C157, H172, H177, C368, C371, H386, and H391.

Involved in cuticle function and is essential for normal morphological development. This chain is Protein dumpy-20 (dpy-20), found in Caenorhabditis briggsae.